The chain runs to 501 residues: Acetylcholine receptor subunit beta (501 aa).

An N-terminal signal peptide occupies residues 1–23; that stretch reads MTPGALLMLLGALGAPLAPGVRG. At 24-244 the chain is on the extracellular side; that stretch reads SEAEGRLREK…VIFYLIIRRK (221 aa). C151 and C165 form a disulfide bridge. N-linked (GlcNAc...) asparagine glycosylation is present at N164. Helical transmembrane passes span 245 to 269, 277 to 295, and 311 to 332; these read PLFY…VFYL, MGLS…LLLA, and YLMF…VLNL. At 333-469 the chain is on the cytoplasmic side; the sequence is HHRSPHTHQM…WQFVAMVVDR (137 aa). At Y390 the chain carries Phosphotyrosine; by Tyr-kinases. A helical membrane pass occupies residues 470–488; the sequence is LFLWTFIIFTSVGTLVIFL.

This sequence belongs to the ligand-gated ion channel (TC 1.A.9) family. Acetylcholine receptor (TC 1.A.9.1) subfamily. Beta-1/CHRNB1 sub-subfamily. As to quaternary structure, pentamer of two alpha chains, and one each of the beta, delta, and gamma (in immature muscle) or epsilon (in mature muscle) chains. The muscle heteropentamer composed of alpha-1, beta-1, delta, epsilon subunits interacts with the alpha-conotoxin ImII.

Its subcellular location is the postsynaptic cell membrane. The protein localises to the cell membrane. It catalyses the reaction K(+)(in) = K(+)(out). It carries out the reaction Na(+)(in) = Na(+)(out). After binding acetylcholine, the AChR responds by an extensive change in conformation that affects all subunits and leads to opening of an ion-conducting channel across the plasma membrane. The chain is Acetylcholine receptor subunit beta from Homo sapiens (Human).